A 586-amino-acid chain; its full sequence is uncharacterized protein (586 aa).

This is an uncharacterized protein from Saccharomyces cerevisiae (strain ATCC 204508 / S288c) (Baker's yeast).